An 86-amino-acid chain; its full sequence is Class II hydrophobin 2 (86 aa).

The signal sequence occupies residues 1–15; sequence MQFFAVALFATSALA. Cystine bridges form between Cys18/Cys67, Cys28/Cys58, Cys29/Cys41, and Cys68/Cys79.

Belongs to the cerato-ulmin hydrophobin family. As to quaternary structure, homodimer. Homodimers further self-assemble to form highly ordered films at water-air interfaces through intermolecular interactions.

It localises to the secreted. It is found in the spore wall. The protein resides in the cell wall. Functionally, aerial growth, conidiation, and dispersal of filamentous fungi in the environment rely upon a capability of their secreting small amphipathic proteins called hydrophobins (HPBs) with low sequence identity. Class I can self-assemble into an outermost layer of rodlet bundles on aerial cell surfaces, conferring cellular hydrophobicity that supports fungal growth, development and dispersal; whereas Class II form highly ordered films at water-air interfaces through intermolecular interactions but contribute nothing to the rodlet structure. Hbf2 is a class II hydrophobin that is involved in sporuration. This Hypocrea jecorina (Trichoderma reesei) protein is Class II hydrophobin 2.